The sequence spans 530 residues: Copine-D (530 aa).

2 C2 domains span residues 1–122 (MNPI…RMKM) and 130–248 (LSGS…EFEI). Positions 25, 31, 85, 87, and 100 each coordinate Ca(2+). Positions 289-507 (NLMVAIDCTA…ALAHETLKEI (219 aa)) constitute a VWFA domain.

The protein belongs to the copine family. Ca(2+) serves as cofactor.

This is Copine-D (cpnD) from Dictyostelium discoideum (Social amoeba).